Here is a 122-residue protein sequence, read N- to C-terminus: MVHVRAKDAVGQYGERVAVRRLTEAGMTVLDRNWRCRSGEIDVVARDGDCLVVCEVKTRRSVSAGTALEAVTPQKLARLRRLTGEWLAAHPGVNPPRVRLDVVAVTVPERGPATVQHVAGVS.

The protein belongs to the UPF0102 family.

This Kineococcus radiotolerans (strain ATCC BAA-149 / DSM 14245 / SRS30216) protein is UPF0102 protein Krad_1407.